Reading from the N-terminus, the 303-residue chain is Dipeptide transport system permease protein DppB (303 aa).

7 consecutive transmembrane segments (helical) span residues 9 to 29 (LGLLLLTLFLIVTLTFFMMQV), 62 to 82 (YFIYVGHMFTGNFGTSFIYTN), 93 to 113 (LPVSMQLGTQALILGTVLGAL), 129 to 149 (IFGFLSVLGISVPSFVIGTLI), 166 to 186 (GTFSQTIMPTIALSFAPMAVV), 227 to 247 (IPMLTLIGPMAAGLLTGSVLI), and 269 to 289 (FPVIMATTIVYAVILMVFILV). Residues 93–290 (LPVSMQLGTQ…VILMVFILVT (198 aa)) form the ABC transmembrane type-1 domain.

Belongs to the binding-protein-dependent transport system permease family. OppBC subfamily. In terms of assembly, the complex is composed of two ATP-binding proteins (DppD and DppF), two transmembrane proteins (DppB and DppC) and a solute-binding protein (DppA).

The protein resides in the cell membrane. Part of the ABC transporter DppABCDF involved in dipeptide transport. Responsible for the translocation of the substrate across the membrane. This chain is Dipeptide transport system permease protein DppB, found in Lactococcus lactis subsp. cremoris (strain MG1363).